Here is a 138-residue protein sequence, read N- to C-terminus: Large ribosomal subunit protein uL16c (138 aa).

Belongs to the universal ribosomal protein uL16 family. As to quaternary structure, part of the 50S ribosomal subunit.

Its subcellular location is the plastid. It is found in the chloroplast. The chain is Large ribosomal subunit protein uL16c from Physcomitrium patens (Spreading-leaved earth moss).